Reading from the N-terminus, the 115-residue chain is Large ribosomal subunit protein uL18 (115 aa).

It belongs to the universal ribosomal protein uL18 family. Part of the 50S ribosomal subunit; part of the 5S rRNA/L5/L18/L25 subcomplex. Contacts the 5S and 23S rRNAs.

Its function is as follows. This is one of the proteins that bind and probably mediate the attachment of the 5S RNA into the large ribosomal subunit, where it forms part of the central protuberance. In Ruthia magnifica subsp. Calyptogena magnifica, this protein is Large ribosomal subunit protein uL18.